The following is a 608-amino-acid chain: MGDLARLPLLEKAPTTHARLLAWVEEVAELTQPDRIHWVDGSEAENKKLTDELVEAGTLKRLNPETFPNSFAAFSDPADVARVEEQTFICSENERDAGFTNNWMAPAEMKQKLRGLFAGSMRGRTMYVIPFVMGHLDAEDPKFGVEITDSAYVVASMRIMARIGTDVLDRITQTDAFFVPALHSLGAPLEAGQADVAWPCNTDKWIVHFPEERSIWSFGSGYGGNALLGKKCYALRIASVMARDEGWLAEHMLILKLTSPEQKTYYISAAFPSACGKTNLALLDPTIKGWKVETLGDDITWMRFGKEGELRAVNPEAGLFGVAPGTGWGTNPNAMRAIAKGNSIFTNVALTDDGGVWWEGMTEETPAHLTDWRGESWTPDSDAPAAHPNSRFCTPIDQIDMLAEEYFSPEGVELSAILFGGRRKTTIPLVTEARNWSNGIFMGSTLSSETTAAAAGAVGVVRRDPMAMLPFIGYDAGDYLNHWVNLSAKANPERLPKIFLVNWFRRTAEGGFAWPGFGDNARVLKWAIERLEGKADAVETPIGFVPTGESIDLEGLDMTPAEVESAVRVDPAEWATELASIEEWFANFGESLPAALQSELDGLKTRLG.

Substrate is bound by residues arginine 82 and 222–224 (YGG). Positions 231 and 251 each coordinate Mn(2+). Serine 273 lines the substrate pocket. 274–279 (ACGKTN) contributes to the GTP binding site. Residue cysteine 275 is part of the active site. Residue aspartate 298 participates in Mn(2+) binding. 389–391 (NSR) lines the substrate pocket. GTP-binding positions include arginine 391, arginine 422, and 517 to 520 (FGDN).

It belongs to the phosphoenolpyruvate carboxykinase [GTP] family. As to quaternary structure, monomer. It depends on Mn(2+) as a cofactor.

It is found in the cytoplasm. The enzyme catalyses oxaloacetate + GTP = phosphoenolpyruvate + GDP + CO2. It functions in the pathway carbohydrate biosynthesis; gluconeogenesis. Functionally, catalyzes the conversion of oxaloacetate (OAA) to phosphoenolpyruvate (PEP), the rate-limiting step in the metabolic pathway that produces glucose from lactate and other precursors derived from the citric acid cycle. The protein is Phosphoenolpyruvate carboxykinase [GTP] of Paenarthrobacter aurescens (strain TC1).